Here is a 743-residue protein sequence, read N- to C-terminus: Threonine synthase-like 1 (743 aa).

Residue lysine 281 is modified to N6-acetyllysine. Lysine 351 carries the post-translational modification N6-(pyridoxal phosphate)lysine.

Belongs to the threonine synthase family. Pyridoxal 5'-phosphate serves as cofactor.

This Homo sapiens (Human) protein is Threonine synthase-like 1 (THNSL1).